A 335-amino-acid chain; its full sequence is dTDP-glucose 4,6-dehydratase (335 aa).

Residues 11-12, 38-41, 61-62, 81-85, and Thr100 each bind NAD(+); these read FI, DKLT, DI, and FAAET. Thr85 lines the substrate pocket. Position 125 (Thr125) interacts with substrate. Asp126 (proton donor) is an active-site residue. Active-site proton acceptor residues include Glu127 and Tyr149. 149–153 provides a ligand contact to NAD(+); sequence YSASK. Asn178 contributes to the substrate binding site. Asn179 provides a ligand contact to NAD(+). Residues 188–189, 204–206, Arg213, Asn248, and 271–275 contribute to the substrate site; these read KI, PLY, and DRKGH.

It belongs to the NAD(P)-dependent epimerase/dehydratase family. dTDP-glucose dehydratase subfamily. NAD(+) is required as a cofactor.

The catalysed reaction is dTDP-alpha-D-glucose = dTDP-4-dehydro-6-deoxy-alpha-D-glucose + H2O. The protein operates within antibiotic biosynthesis. Involved in the biosynthesis of the two 2,6-deoxysugars, dTDP-L-oleandrose and dTDP-D-desosamine, attached to the macrolactone ring oleandolide to produce the aglycone antibiotic oleandomycin. Catalyzes the dehydration of dTDP-D-glucose to form dTDP-6-deoxy-D-xylo-4-hexulose via a three-step process involving oxidation, dehydration and reduction. The sequence is that of dTDP-glucose 4,6-dehydratase from Streptomyces antibioticus.